The sequence spans 252 residues: 3-dehydroquinate dehydratase (252 aa).

Residues Ser21, 46–48 (EWR), and Arg82 contribute to the 3-dehydroquinate site. Residue His143 is the Proton donor/acceptor of the active site. The active-site Schiff-base intermediate with substrate is the Lys170. 3-dehydroquinate contacts are provided by Arg213, Ser232, and Gln236.

This sequence belongs to the type-I 3-dehydroquinase family. Homodimer.

The enzyme catalyses 3-dehydroquinate = 3-dehydroshikimate + H2O. It participates in metabolic intermediate biosynthesis; chorismate biosynthesis; chorismate from D-erythrose 4-phosphate and phosphoenolpyruvate: step 3/7. Its function is as follows. Involved in the third step of the chorismate pathway, which leads to the biosynthesis of aromatic amino acids. Catalyzes the cis-dehydration of 3-dehydroquinate (DHQ) and introduces the first double bond of the aromatic ring to yield 3-dehydroshikimate. The chain is 3-dehydroquinate dehydratase from Escherichia coli O139:H28 (strain E24377A / ETEC).